Here is a 324-residue protein sequence, read N- to C-terminus: Ribosomal RNA small subunit methyltransferase H (324 aa).

Residues 35-37, D55, F85, D103, and Q110 each bind S-adenosyl-L-methionine; that span reads GGH.

This sequence belongs to the methyltransferase superfamily. RsmH family.

The protein resides in the cytoplasm. The catalysed reaction is cytidine(1402) in 16S rRNA + S-adenosyl-L-methionine = N(4)-methylcytidine(1402) in 16S rRNA + S-adenosyl-L-homocysteine + H(+). Its function is as follows. Specifically methylates the N4 position of cytidine in position 1402 (C1402) of 16S rRNA. This is Ribosomal RNA small subunit methyltransferase H from Solidesulfovibrio magneticus (strain ATCC 700980 / DSM 13731 / RS-1) (Desulfovibrio magneticus).